The following is a 133-amino-acid chain: Ribosome-binding factor A (133 aa).

This sequence belongs to the RbfA family. Monomer. Binds 30S ribosomal subunits, but not 50S ribosomal subunits or 70S ribosomes.

The protein resides in the cytoplasm. Its function is as follows. One of several proteins that assist in the late maturation steps of the functional core of the 30S ribosomal subunit. Associates with free 30S ribosomal subunits (but not with 30S subunits that are part of 70S ribosomes or polysomes). Required for efficient processing of 16S rRNA. May interact with the 5'-terminal helix region of 16S rRNA. The polypeptide is Ribosome-binding factor A (Chlamydia muridarum (strain MoPn / Nigg)).